The primary structure comprises 200 residues: dTTP/UTP pyrophosphatase (200 aa).

The Proton acceptor role is filled by Asp81.

It belongs to the Maf family. YhdE subfamily. A divalent metal cation is required as a cofactor.

Its subcellular location is the cytoplasm. It catalyses the reaction dTTP + H2O = dTMP + diphosphate + H(+). The catalysed reaction is UTP + H2O = UMP + diphosphate + H(+). Nucleoside triphosphate pyrophosphatase that hydrolyzes dTTP and UTP. May have a dual role in cell division arrest and in preventing the incorporation of modified nucleotides into cellular nucleic acids. The protein is dTTP/UTP pyrophosphatase of Cupriavidus pinatubonensis (strain JMP 134 / LMG 1197) (Cupriavidus necator (strain JMP 134)).